A 184-amino-acid polypeptide reads, in one-letter code: Alpha-tubulin N-acetyltransferase (184 aa).

Residues M1–F174 form the N-acetyltransferase domain. Acetyl-CoA contacts are provided by residues F108–L121 and S144–K153.

It belongs to the acetyltransferase ATAT1 family.

The enzyme catalyses L-lysyl-[alpha-tubulin] + acetyl-CoA = N(6)-acetyl-L-lysyl-[alpha-tubulin] + CoA + H(+). Functionally, specifically acetylates 'Lys-40' in alpha-tubulin on the lumenal side of microtubules. Promotes microtubule destabilization and accelerates microtubule dynamics; this activity may be independent of acetylation activity. Acetylates alpha-tubulin with a slow enzymatic rate, due to a catalytic site that is not optimized for acetyl transfer. Enters the microtubule through each end and diffuses quickly throughout the lumen of microtubules. Acetylates only long/old microtubules because of its slow acetylation rate since it does not have time to act on dynamically unstable microtubules before the enzyme is released. In Plasmodium vivax (strain Salvador I), this protein is Alpha-tubulin N-acetyltransferase.